We begin with the raw amino-acid sequence, 144 residues long: Large ribosomal subunit protein uL15 (144 aa).

The segment covering Met1 to Glu10 has biased composition (basic and acidic residues). Residues Met1–Gln52 are disordered. Residues Thr23–Gln35 show a composition bias toward gly residues.

This sequence belongs to the universal ribosomal protein uL15 family. As to quaternary structure, part of the 50S ribosomal subunit.

Binds to the 23S rRNA. This is Large ribosomal subunit protein uL15 from Ligilactobacillus salivarius (strain UCC118) (Lactobacillus salivarius).